The following is a 555-amino-acid chain: MFGDTSEVLPVAEGKGSSWPTQRLTMTVAFADGDRTWSFDLFSKLAGLALLSFAALFIQRRLFHPLRKYPGPWLNSLSEIPAAIALASGRQQAYYRRLHSRYATSSGTIVRVAPNELSFVDPNAWQDIYNRKPPHMEKHPVFIGAVAKVGGAVGISMAPLATKDHSRHRRALGYSFATSALVEQQEIILKQVRNLISHLKVFARKEKAIDMTDWYTYTTFDLMGDLVFGQPFGCLDGEGPTEWSRAIIHVFVSGAWEQAIRRVAGVNTWAESVLKKILIPKKVALWRRLHFAKSRETTLKRIKDGQRNHKDLMYFLLKNKEARQNLSDLEIMINMVLLVSAGSETTASTLTAWTYFVCTNRSVHRRLLKEIRGNFKTAEHIVWENTQPDQLPYLEATIHEALRLVPPPASSQQRVVPPGGAVICGERIPEGYAVAVPPVAVTHLDINFADPTGFHPERWLPRDDDDWDEKFAKDKLGASQPFSLGPRACLGKTLAYFELRLILASVLWNFDIDLAHAKETKDLWTMEDDMKYLKGYLTWVKPPLPVRLQEVKREA.

The next 2 helical transmembrane spans lie at 38 to 58 (SFDL…ALFI) and 141 to 161 (VFIG…APLA). N-linked (GlcNAc...) asparagine glycosylation is found at Asn325 and Asn360. Cys489 contacts heme.

This sequence belongs to the cytochrome P450 family. The cofactor is heme.

It localises to the membrane. It functions in the pathway hormone biosynthesis. In terms of biological role, cytochrome P450 monooxygenase; part of the gene cluster that mediates the biosynthesis of abscisic acid (ABA), a phytohormone that acts antagonistically toward salicylic acid (SA), jasmonic acid (JA) and ethylene (ETH) signaling, to impede plant defense responses. The first step of the pathway catalyzes the reaction from farnesyl diphosphate to alpha-ionylideneethane performed by the alpha-ionylideneethane synthase abl3 via a three-step reaction mechanism involving 2 neutral intermediates, beta-farnesene and allofarnesene. The cytochrome P450 monooxygenase abl1 might then be involved in the conversion of alpha-ionylideneethane to alpha-ionylideneacetic acid. Alpha-ionylideneacetic acid is further converted to abscisic acid in 2 steps involving the cytochrome P450 monooxygenase abl2 and the short-chain dehydrogenase/reductase abl4, via the intermediates 1'-deoxy-ABA or 1',4'-trans-diol-ABA, depending on the order of action of these 2 enzymes. Abl2 is responsible for the hydroxylation of carbon atom C-1' and abl4 might be involved in the oxidation of the C-4' carbon atom. The chain is Cytochrome P450 monooxygenase abl2 from Leptosphaeria maculans (strain JN3 / isolate v23.1.3 / race Av1-4-5-6-7-8) (Blackleg fungus).